A 263-amino-acid chain; its full sequence is Probable elongation factor 1-beta/1-delta 2 (263 aa).

Residue Ser-2 is modified to N-acetylserine. A disordered region spans residues 112 to 153; sequence QGQTSSVAAPAAAPAAAKEEAAGDDDFDLFGSEDEEEDEEKK. Over residues 133-150 the composition is skewed to acidic residues; it reads AGDDDFDLFGSEDEEEDE.

This sequence belongs to the EF-1-beta/EF-1-delta family. In terms of assembly, EF-1 is composed of 4 subunits: alpha, beta, delta, and gamma.

Functionally, EF-1-beta and EF-1-delta stimulate the exchange of GDP bound to EF-1-alpha to GTP. This Caenorhabditis elegans protein is Probable elongation factor 1-beta/1-delta 2.